The following is a 700-amino-acid chain: Putative cysteine-rich receptor-like protein kinase 30 (700 aa).

A signal peptide spans 1–24; the sequence is MRQNNLFSLIFWLVPVSLIIVVSA. Gnk2-homologous domains lie at 25-129 and 135-250; these read QLCS…NQPS and LESV…LYPF. The Extracellular segment spans residues 25–285; it reads QLCSEKFGTF…KDEKTIHTGT (261 aa). 5 N-linked (GlcNAc...) asparagine glycosylation sites follow: Asn-63, Asn-105, Asn-146, Asn-150, and Asn-191. A helical membrane pass occupies residues 286–306; that stretch reads IIGIVIVVAMVIIMALLALGV. Over 307-700 the chain is Cytoplasmic; it reads SVCRSRKKYQ…SKSMYRNTED (394 aa). Residues 346–626 enclose the Protein kinase domain; the sequence is FLASNKIGQG…IFQMLTNSSI (281 aa). ATP-binding positions include 352-360 and Lys-374; that span reads IGQGGFGEV. Asp-474 (proton acceptor) is an active-site residue. Ser-478 carries the post-translational modification Phosphoserine. Thr-514 is modified (phosphothreonine). At Tyr-522 the chain carries Phosphotyrosine.

It belongs to the protein kinase superfamily. Ser/Thr protein kinase family. CRK subfamily.

The protein resides in the membrane. The catalysed reaction is L-seryl-[protein] + ATP = O-phospho-L-seryl-[protein] + ADP + H(+). It carries out the reaction L-threonyl-[protein] + ATP = O-phospho-L-threonyl-[protein] + ADP + H(+). The polypeptide is Putative cysteine-rich receptor-like protein kinase 30 (CRK30) (Arabidopsis thaliana (Mouse-ear cress)).